The sequence spans 179 residues: Interleukin-22 (179 aa).

An N-terminal signal peptide occupies residues 1–33 (MAALQKSVSSFLMGTLATSCLLLLALLVQGGAA). Disulfide bonds link cysteine 40–cysteine 132 and cysteine 89–cysteine 178. N-linked (GlcNAc...) asparagine glycosylation is found at asparagine 54, asparagine 68, and asparagine 97.

It belongs to the IL-10 family.

It is found in the secreted. Cytokine that plays a critical role in modulating tissue responses during inflammation. Plays an essential role in the regeneration of epithelial cells to maintain barrier function after injury and for the prevention of further tissue damage. Unlike most of the cytokines, has no effect on immune cells. Signals through a heterodimeric receptor composed of two subunits, the specific receptor IL22RA1 which is present on non-immune cells in many organs and the shared subunit IL10RB. Ligation of IL22RA1 with IL22 induces activation of the tyrosine kinases JAK1 and TYK2, which in turn activates STAT3. In turn, promotes cell survival and proliferation through STAT3, ERK1/2 and PI3K/AKT pathways. Promotes phosphorylation of GSK3B at 'Ser-9' and CTTN. Promotes epithelial cell spreading. The polypeptide is Interleukin-22 (IL22) (Homo sapiens (Human)).